A 182-amino-acid polypeptide reads, in one-letter code: Bifunctional protein PyrR (182 aa).

Positions 99-111 (IVLVDDVIFTGRT) match the PRPP-binding motif.

This sequence belongs to the purine/pyrimidine phosphoribosyltransferase family. PyrR subfamily. In terms of assembly, homodimer and homohexamer; in equilibrium.

It carries out the reaction UMP + diphosphate = 5-phospho-alpha-D-ribose 1-diphosphate + uracil. Its function is as follows. Regulates transcriptional attenuation of the pyrimidine nucleotide (pyr) operon by binding in a uridine-dependent manner to specific sites on pyr mRNA. This disrupts an antiterminator hairpin in the RNA and favors formation of a downstream transcription terminator, leading to a reduced expression of downstream genes. In terms of biological role, also displays a weak uracil phosphoribosyltransferase activity which is not physiologically significant. The polypeptide is Bifunctional protein PyrR (Caldicellulosiruptor saccharolyticus (strain ATCC 43494 / DSM 8903 / Tp8T 6331)).